We begin with the raw amino-acid sequence, 200 residues long: NADH-quinone oxidoreductase subunit C (200 aa).

It belongs to the complex I 30 kDa subunit family. As to quaternary structure, NDH-1 is composed of 14 different subunits. Subunits NuoB, C, D, E, F, and G constitute the peripheral sector of the complex.

It localises to the cell inner membrane. It carries out the reaction a quinone + NADH + 5 H(+)(in) = a quinol + NAD(+) + 4 H(+)(out). In terms of biological role, NDH-1 shuttles electrons from NADH, via FMN and iron-sulfur (Fe-S) centers, to quinones in the respiratory chain. The immediate electron acceptor for the enzyme in this species is believed to be ubiquinone. Couples the redox reaction to proton translocation (for every two electrons transferred, four hydrogen ions are translocated across the cytoplasmic membrane), and thus conserves the redox energy in a proton gradient. The polypeptide is NADH-quinone oxidoreductase subunit C (Burkholderia vietnamiensis (strain G4 / LMG 22486) (Burkholderia cepacia (strain R1808))).